Reading from the N-terminus, the 85-residue chain is Insecticidal toxin Vn1 (85 aa).

Residues Met1–Ser23 form the signal peptide. A disulfide bond links Cys71 and Cys84.

In terms of tissue distribution, highly expressed in the venom apparatus, and weakly expressed in residual body.

It localises to the secreted. Functionally, endoparasitoid venom toxin that exhibits insecticidal activity against Tenebrio molitor pupae. Impacts genes related to immune response, environmental information processing, metabolism, and response to external stimuli in T.molitor, suggesting its involvement in the intricate parasitoid wasp-host interaction. The sequence is that of Insecticidal toxin Vn1 from Aphidius gifuensis (Parasitoid wasp).